We begin with the raw amino-acid sequence, 517 residues long: Beta-glucosidase 17 (517 aa).

Residues 1-23 (MAIKSIFIIIIISIITSISELYA) form the signal peptide. A beta-D-glucoside-binding positions include Q54, H158, and 203 to 204 (NE). The Proton donor role is filled by E204. C223 and C230 form a disulfide bridge. N229 carries an N-linked (GlcNAc...) asparagine glycan. Position 346 (Y346) interacts with a beta-D-glucoside. Residues N361 and N371 are each glycosylated (N-linked (GlcNAc...) asparagine). Residues E417, W466, 473-474 (EW), and Y482 contribute to the a beta-D-glucoside site. The active-site Nucleophile is the E417. An N-linked (GlcNAc...) asparagine glycan is attached at N510.

This sequence belongs to the glycosyl hydrolase 1 family.

It catalyses the reaction Hydrolysis of terminal, non-reducing beta-D-glucosyl residues with release of beta-D-glucose.. The protein is Beta-glucosidase 17 of Arabidopsis thaliana (Mouse-ear cress).